The chain runs to 193 residues: MSWLVVLLILYVIWDVNYFIRCVFTVFAGRLFQRKRKVTDTTTIYGLCTSQDVDIFIRHMNNARYLRELDFARFHFYALTGLYERIRDRRGGAVQGASSVRYRRTIPIFHPYKIQTKLIWWDDKAIYLEQQFITLSDGFVRAVAMSKQNITNCNVLEVLKTYPETAQRPEKPEELKLWLDAIELSSQKLRKDK.

The signal sequence occupies residues 1 to 18; the sequence is MSWLVVLLILYVIWDVNY. Asn-149 carries an N-linked (GlcNAc...) asparagine glycan.

The protein belongs to the THEM6 family.

It localises to the secreted. This is Protein THEM6 from Drosophila melanogaster (Fruit fly).